Consider the following 811-residue polypeptide: Potassium transporter 27 (811 aa).

Residues 1–64 (MGDDVLGRGS…QEESWARTLK (64 aa)) lie on the Cytoplasmic side of the membrane. Residues 65–85 (LAFQCVGILYGDIGTSPLFVY) form a helical membrane-spanning segment. The Extracellular segment spans residues 86 to 102 (SSTFKDGVRHPDDLLGA). Residues 103 to 123 (LSLIIYSFALFTIVKYVFIAL) traverse the membrane as a helical segment. Topologically, residues 124-188 (RANDDGDGGT…ELLETNRAVK (65 aa)) are cytoplasmic. Residues 189–209 (IWLFLLTILATAMVISDAVLT) form a helical membrane-spanning segment. Residues 210 to 226 (PAISVLSAVGGLKEKAP) lie on the Extracellular side of the membrane. A helical membrane pass occupies residues 227 to 247 (NLTTDEIVWITVATLVVLFAI). The Cytoplasmic portion of the chain corresponds to 248–254 (QRFGTDK). Residues 255–275 (IGYLFAPIILLWLLLIGCVGI) form a helical membrane-spanning segment. Residues 276 to 310 (YNTIKFDTGVLRAFNLKYIIDYFRRNKKDGWISLS) are Extracellular-facing. Residues 311–331 (GILLCFTGTEALFSDLGYFSI) form a helical membrane-spanning segment. The Cytoplasmic portion of the chain corresponds to 332–335 (RSIQ). A helical transmembrane segment spans residues 336–356 (LSFSFGLVPSVLLAYIGQAAY). The Extracellular portion of the chain corresponds to 357–375 (LREHPEHIANTFYRSTPNV). The chain crosses the membrane as a helical span at residues 376–396 (MFWPTFILAVAASIIGSQAMI). The Cytoplasmic portion of the chain corresponds to 397-434 (SCAFATISHLQTLNCFPRVKILHTSRQYSGQLYIPEVN). The chain crosses the membrane as a helical span at residues 435–455 (FLLCVGACLVTIGFKTTVIIG). At 456 to 459 (EAHA) the chain is on the extracellular side. The chain crosses the membrane as a helical span at residues 460 to 480 (ICVVFVMIITTLLLTIVMLLV). The Cytoplasmic portion of the chain corresponds to 481–482 (WK). A helical transmembrane segment spans residues 483–503 (VSIWYVALFFIVFMSSESIYL). Over 504–515 (SAVLYQFVHGEY) the chain is Extracellular. The chain crosses the membrane as a helical span at residues 516 to 536 (VPVAMSVFLMIVMTVWHYVHV). At 537–811 (KRYEFELEHT…VLKVGIAYEI (275 aa)) the chain is on the cytoplasmic side.

The protein belongs to the HAK/KUP transporter (TC 2.A.72.3) family.

Its subcellular location is the membrane. High-affinity potassium transporter. The protein is Potassium transporter 27 (HAK27) of Oryza sativa subsp. japonica (Rice).